Here is a 764-residue protein sequence, read N- to C-terminus: 1,4-alpha-glucan branching enzyme GlgB (764 aa).

Asp434 serves as the catalytic Nucleophile. Residue Glu487 is the Proton donor of the active site.

This sequence belongs to the glycosyl hydrolase 13 family. GlgB subfamily. Monomer.

It catalyses the reaction Transfers a segment of a (1-&gt;4)-alpha-D-glucan chain to a primary hydroxy group in a similar glucan chain.. It functions in the pathway glycan biosynthesis; glycogen biosynthesis. Catalyzes the formation of the alpha-1,6-glucosidic linkages in glycogen by scission of a 1,4-alpha-linked oligosaccharide from growing alpha-1,4-glucan chains and the subsequent attachment of the oligosaccharide to the alpha-1,6 position. In Nostoc sp. (strain PCC 7120 / SAG 25.82 / UTEX 2576), this protein is 1,4-alpha-glucan branching enzyme GlgB.